A 113-amino-acid chain; its full sequence is Ig kappa chain V-II region 17S29.1 (113 aa).

Residues 1–23 (DIVMTQAVFSNPVTLGTSASISC) form a framework-1 region. Cysteines 23 and 93 form a disulfide. Positions 24–39 (RSSKSLLHSNGITYLY) are complementarity-determining-1. A framework-2 region spans residues 40 to 54 (WYLQKPGQSPQLLLY). The segment at 55 to 61 (QMSNLAS) is complementarity-determining-2. Residues 62–93 (GVPDRFSSSGSGTDFTLRISRVEAEDVGVYYC) are framework-3. The segment at 94-102 (AHNLELPYT) is complementarity-determining-3. Residues 103–112 (FGGGTKLEIK) are framework-4.

In terms of biological role, anti-streptococcal group A carbohydrate antibody. In Mus musculus (Mouse), this protein is Ig kappa chain V-II region 17S29.1.